We begin with the raw amino-acid sequence, 423 residues long: Serine--tRNA ligase (423 aa).

231–233 contributes to the L-serine binding site; sequence TAE. Residue 262–264 participates in ATP binding; it reads RSE. L-serine is bound at residue glutamate 285. 349–352 contacts ATP; that stretch reads EISS. Residue serine 384 coordinates L-serine.

It belongs to the class-II aminoacyl-tRNA synthetase family. Type-1 seryl-tRNA synthetase subfamily. In terms of assembly, homodimer. The tRNA molecule binds across the dimer.

Its subcellular location is the cytoplasm. It carries out the reaction tRNA(Ser) + L-serine + ATP = L-seryl-tRNA(Ser) + AMP + diphosphate + H(+). The enzyme catalyses tRNA(Sec) + L-serine + ATP = L-seryl-tRNA(Sec) + AMP + diphosphate + H(+). It functions in the pathway aminoacyl-tRNA biosynthesis; selenocysteinyl-tRNA(Sec) biosynthesis; L-seryl-tRNA(Sec) from L-serine and tRNA(Sec): step 1/1. In terms of biological role, catalyzes the attachment of serine to tRNA(Ser). Is also able to aminoacylate tRNA(Sec) with serine, to form the misacylated tRNA L-seryl-tRNA(Sec), which will be further converted into selenocysteinyl-tRNA(Sec). This Acinetobacter baumannii (strain AB307-0294) protein is Serine--tRNA ligase.